A 156-amino-acid polypeptide reads, in one-letter code: Small ribosomal subunit protein uS7 (156 aa).

The protein belongs to the universal ribosomal protein uS7 family. In terms of assembly, part of the 30S ribosomal subunit. Contacts proteins S9 and S11.

One of the primary rRNA binding proteins, it binds directly to 16S rRNA where it nucleates assembly of the head domain of the 30S subunit. Is located at the subunit interface close to the decoding center, probably blocks exit of the E-site tRNA. The chain is Small ribosomal subunit protein uS7 from Alkaliphilus oremlandii (strain OhILAs) (Clostridium oremlandii (strain OhILAs)).